We begin with the raw amino-acid sequence, 193 residues long: ECF RNA polymerase sigma factor SigK (193 aa).

The tract at residues 35 to 101 is sigma-70 factor domain-2; the sequence is LYDRTRSRVY…RRAVDRVRSE (67 aa). Residues 59–62 carry the Polymerase core binding motif; it reads ETTQ. The segment at 140–187 is sigma-70 factor domain-4; that stretch reads MGSLSDLQREAIQLAYYEGLTYVQVSERLSANLATIKSRMRGGIRGLK. The H-T-H motif DNA-binding region spans 161 to 180; that stretch reads YVQVSERLSANLATIKSRMR.

This sequence belongs to the sigma-70 factor family. ECF subfamily. Interacts transiently with the RNA polymerase catalytic core formed by RpoA, RpoB, RpoC and RpoZ (2 alpha, 1 beta, 1 beta' and 1 omega subunit) to form the RNA polymerase holoenzyme that can initiate transcription. Interacts (via sigma-70 factor domain 4) with anti-sigma-K factor RskA.

Sigma factors are initiation factors that promote the attachment of RNA polymerase to specific initiation sites and are then released. Extracytoplasmic function (ECF) sigma factors are held in an inactive form by an anti-sigma factor until released by regulated intramembrane proteolysis. The polypeptide is ECF RNA polymerase sigma factor SigK (sigK) (Mycobacterium sp. (strain KMS)).